A 400-amino-acid chain; its full sequence is CCA-adding enzyme (400 aa).

ATP contacts are provided by G8 and R11. Residues G8 and R11 each coordinate CTP. Positions 21 and 23 each coordinate Mg(2+). ATP is bound by residues R91, R137, and R140. CTP contacts are provided by R91, R137, and R140. Residues N217–W322 enclose the HD domain.

It belongs to the tRNA nucleotidyltransferase/poly(A) polymerase family. Bacterial CCA-adding enzyme type 2 subfamily. Mg(2+) is required as a cofactor.

The enzyme catalyses a tRNA precursor + 2 CTP + ATP = a tRNA with a 3' CCA end + 3 diphosphate. It carries out the reaction a tRNA with a 3' CCA end + 2 CTP + ATP = a tRNA with a 3' CCACCA end + 3 diphosphate. Its function is as follows. Catalyzes the addition and repair of the essential 3'-terminal CCA sequence in tRNAs without using a nucleic acid template. Adds these three nucleotides in the order of C, C, and A to the tRNA nucleotide-73, using CTP and ATP as substrates and producing inorganic pyrophosphate. tRNA 3'-terminal CCA addition is required both for tRNA processing and repair. Also involved in tRNA surveillance by mediating tandem CCA addition to generate a CCACCA at the 3' terminus of unstable tRNAs. While stable tRNAs receive only 3'-terminal CCA, unstable tRNAs are marked with CCACCA and rapidly degraded. The chain is CCA-adding enzyme from Actinobacillus succinogenes (strain ATCC 55618 / DSM 22257 / CCUG 43843 / 130Z).